A 338-amino-acid chain; its full sequence is Calcium uniporter protein 4, mitochondrial (338 aa).

Residues 1–36 constitute a mitochondrion transit peptide; sequence MVMMKKLLSNRLFNMSKTASQSLMNCRTSSSSSLAM. A helical transmembrane segment spans residues 233-253; the sequence is LWAGLGYLIIQTAGFMRLTFW. Positions 257-265 match the Selectivity filter motif; that stretch reads WDVMEPICF. Glutamate 261 contacts Ca(2+). Residues 263-280 traverse the membrane as a helical segment; it reads ICFYVSSVYFMAGYTFFL.

The protein belongs to the MCU (TC 1.A.77) family.

It is found in the mitochondrion inner membrane. It catalyses the reaction Ca(2+)(in) = Ca(2+)(out). Its function is as follows. Mitochondrial inner membrane calcium uniporter that mediates calcium uptake into mitochondria. Constitutes a pore-forming and calcium-conducting subunit. Mitochondrial calcium homeostasis plays key roles in cellular physiology and regulates cell bioenergetics, cytoplasmic calcium signals and activation of cell death pathways. The polypeptide is Calcium uniporter protein 4, mitochondrial (Arabidopsis thaliana (Mouse-ear cress)).